The following is a 172-amino-acid chain: Ribosome maturation factor RimP (172 aa).

It belongs to the RimP family.

It localises to the cytoplasm. Functionally, required for maturation of 30S ribosomal subunits. The polypeptide is Ribosome maturation factor RimP (Chlorobium phaeovibrioides (strain DSM 265 / 1930) (Prosthecochloris vibrioformis (strain DSM 265))).